The chain runs to 340 residues: Sulfotransferase ppzF (340 aa).

It functions in the pathway secondary metabolite biosynthesis. Sulfotransferase; part of the gene cluster that mediates the biosynthesis of pyrrolopyrazines, secondary metabolites showing insecticidal activity. The role of ppzF within the pathway has still to be determined. The single multifunctional NRPS ppzA is sufficient to produce peramine via condensation of 1-pyrroline-5-carboxylate and arginine, N-methylation of the alpha-amino group of arginine and reduction of the thioester and the cyclization to form an iminium ion resulting in release from the peptide synthetase. Deprotonation of this intermediate and oxidation of the pyrroline ring would give rise to peramine. In Epichloe species that produce only peramine, the peramine synthetase gene is not localized in a gene cluster, in contrast to Metarhizium species that contain additional pyrrolopyrazine biosynthesis genes. The 2-oxoglutarate-Fe(II) type oxidoreductase ppzC hydroxylates peramine to yield the newly identified compound 8-hydroxyperamine whereas ppzD converts L-proline into trans-4-hydroxy-L-proline, a precursor of peramine biosynthesis. The protein is Sulfotransferase ppzF of Metarhizium rileyi (strain RCEF 4871) (Nomuraea rileyi).